The following is a 600-amino-acid chain: Elongation factor 4 (600 aa).

In terms of domain architecture, tr-type G spans 6–188 (QFIRNFSIIA…QITKQIPSPK (183 aa)). GTP-binding positions include 18–23 (DHGKST) and 135–138 (NKID).

Belongs to the TRAFAC class translation factor GTPase superfamily. Classic translation factor GTPase family. LepA subfamily.

Its subcellular location is the cell inner membrane. It carries out the reaction GTP + H2O = GDP + phosphate + H(+). Required for accurate and efficient protein synthesis under certain stress conditions. May act as a fidelity factor of the translation reaction, by catalyzing a one-codon backward translocation of tRNAs on improperly translocated ribosomes. Back-translocation proceeds from a post-translocation (POST) complex to a pre-translocation (PRE) complex, thus giving elongation factor G a second chance to translocate the tRNAs correctly. Binds to ribosomes in a GTP-dependent manner. The polypeptide is Elongation factor 4 (Leptospira interrogans serogroup Icterohaemorrhagiae serovar copenhageni (strain Fiocruz L1-130)).